Reading from the N-terminus, the 474-residue chain is PRAME family member 8 (474 aa).

The stretch at 97-122 (QSKLQVLDLRNVDENFCDIFSGATAS) is one LRR 1; degenerate repeat. One copy of the LRR 2; degenerate repeat lies at 177–201 (HVCCKELQVFGMPIHSIIEVLNMVE). One copy of the LRR 3; degenerate repeat lies at 202-228 (LDCIQEVEVCCPWELSTLVKFAPYLGQ). The LRR 4; degenerate repeat unit spans residues 229–264 (MRNLRKLVLFNIRASACIPPDNKGQFIARFTSQFLK). LRR repeat units follow at residues 265–290 (LDYFQNLSMHSVSFLEGHLDQLLRCL), 291–322 (QASLEMVVMTDCLLSESDLKHLSWCPSIRQLK), 323–341 (ELDLRGVTLTHFSPEPLTG), 347–374 (VATLQTLDLEDCGIMDSQLSAILPVLSR), and 375–399 (CSQLSTFSFCGNLISMAALENLLRH).

Belongs to the PRAME family.

This Homo sapiens (Human) protein is PRAME family member 8.